The sequence spans 175 residues: Adenine phosphoribosyltransferase (175 aa).

The protein belongs to the purine/pyrimidine phosphoribosyltransferase family. In terms of assembly, homodimer.

The protein localises to the cytoplasm. It carries out the reaction AMP + diphosphate = 5-phospho-alpha-D-ribose 1-diphosphate + adenine. It participates in purine metabolism; AMP biosynthesis via salvage pathway; AMP from adenine: step 1/1. In terms of biological role, catalyzes a salvage reaction resulting in the formation of AMP, that is energically less costly than de novo synthesis. The protein is Adenine phosphoribosyltransferase of Maricaulis maris (strain MCS10) (Caulobacter maris).